The chain runs to 26 residues: Acyl carrier protein (26 aa).

Residues 2 to 26 (SDTATRVQKIVVEHLGVESDKVTQE) enclose the Carrier domain.

Belongs to the acyl carrier protein (ACP) family. 4'-phosphopantetheine is transferred from CoA to a specific serine of apo-ACP by AcpS. This modification is essential for activity because fatty acids are bound in thioester linkage to the sulfhydryl of the prosthetic group.

The protein resides in the cytoplasm. It participates in lipid metabolism; fatty acid biosynthesis. Functionally, carrier of the growing fatty acid chain in fatty acid biosynthesis. The chain is Acyl carrier protein (acpP) from Erythrobacter longus.